We begin with the raw amino-acid sequence, 218 residues long: uncharacterized protein (218 aa).

This is an uncharacterized protein from Acanthamoeba polyphaga (Amoeba).